The primary structure comprises 349 residues: MAHQTGIHATEELKEFFAKARAGSIRLIKVIIEDEQLVLGASQEPVGRWDQDYDRAVLPLLDAQEPCYLLFRLDSQNAQGFEWLFLAWSPDNSPVRLKMLYAATRATVKKEFGGGHIKDELFGTVKDDLSLAGYQKHLSSCAAPAPLTSAERELQQIRINEVKTEISVESKHQTLQGLAFPLQPEAQRALQQLKQKTVNYIQLKLDLERETIELVHTEPTNVAQLPSRIPRDAARYHFFLYKHTHEGDALESVVFIYSMPGYKCSIKERMLYSSCKSRLLDSVEQDFQLEIAKKIEIGDGAELTAEFLYDEVHPKQHAFKQAFAKPKGPGGKRGHKRLIRGPGENGEDS.

Position 2 is an N-acetylalanine (alanine 2). ADF-H domains are found at residues 4 to 139 (QTGI…KHLS) and 177 to 313 (GLAF…DEVH). Lysine 14 carries the N6-acetyllysine modification. At tyrosine 309 the chain carries Phosphotyrosine. The disordered stretch occupies residues 322-349 (AFAKPKGPGGKRGHKRLIRGPGENGEDS). Residues 330–339 (GGKRGHKRLI) show a composition bias toward basic residues. Serine 349 is modified (phosphoserine).

The protein belongs to the actin-binding proteins ADF family. Twinfilin subfamily. Interacts with G-actin; ADP-actin form and capping protein (CP). Isoform 2 interacts (via its N-terminal ADF-H domain) with G-actin (ADP-bound form) with significantly higher affinity than isoform 1. May also be able to interact with TWF1 and phosphoinositides, PI(4,5)P2. When bound to PI(4,5)P2, it is down-regulated. Interacts with MYO7A. Phosphorylated on both serine/threonine and tyrosine. As to expression, isoform 1 is ubiquitously expressed (at protein level). Isoform 2 expression is restricted to heart and skeletal muscle where it is the predominant form.

It localises to the cytoplasm. It is found in the cytoskeleton. The protein localises to the perinuclear region. Its subcellular location is the cell projection. The protein resides in the stereocilium. Actin-binding protein involved in motile and morphological processes. Inhibits actin polymerization, likely by sequestering G-actin. By capping the barbed ends of filaments, it also regulates motility. Seems to play an important role in clathrin-mediated endocytosis and distribution of endocytic organelles. May play a role in regulating the mature length of the middle and short rows of stereocilia. The chain is Twinfilin-2 (Twf2) from Mus musculus (Mouse).